Here is a 614-residue protein sequence, read N- to C-terminus: Maltose permease MAL31 (614 aa).

Residues 1-48 (MKGLSSLINRKKDRNDSHLDEIENGVNATEFNSIEMEEQGKKSDFDLS) form a disordered region. At 1 to 108 (MKGLSSLINR…AAAWSLLVST (108 aa)) the chain is on the cytoplasmic side. Residues 38–48 (EQGKKSDFDLS) show a composition bias toward basic and acidic residues. Residues 109–129 (TLIQEGYDTAILGAFYALPVF) traverse the membrane as a helical segment. At 130–144 (QKKYGSLNSNTGDYE) the chain is on the extracellular side. The helical transmembrane segment at 145–165 (ISVSWQIGLCLCYMAGEIVGL) threads the bilayer. At 166-180 (QMTGPSVDYMGNRYT) the chain is on the cytoplasmic side. A helical transmembrane segment spans residues 181–201 (LIMALFFLAAFIFILYFCKSL). Gly-202 is a topological domain (extracellular). The chain crosses the membrane as a helical span at residues 203–223 (MIAVGQALCGMPWGCFQCLTV). Residues 224 to 236 (SYASEICPLALRY) lie on the Cytoplasmic side of the membrane. Residues 237-257 (YLTTYSNLCWAFGQLFAAGIM) traverse the membrane as a helical segment. Residues 258–272 (KNSQNKYANSELGYK) lie on the Extracellular side of the membrane. Residues 273–293 (LPFALQWIWPLPLAVGIFFAP) traverse the membrane as a helical segment. Over 294–364 (ESPWWLVKKG…KDGINRRRTR (71 aa)) the chain is Cytoplasmic. A helical membrane pass occupies residues 365–385 (IACLCWIGQCSCGASLIGYST). Residues 386 to 398 (YFYEKAGVSTDTA) are Extracellular-facing. A helical membrane pass occupies residues 399-419 (FTFSIIQYCLGIAATFISWWA). Residues 420–427 (SKYCGRFD) are Cytoplasmic-facing. The helical transmembrane segment at 428 to 448 (LYAFGLAFQAIMFFIIGGLGC) threads the bilayer. At 449–460 (SDTHGAKMGSGA) the chain is on the extracellular side. A helical membrane pass occupies residues 461-481 (LLMVVAFFYNLGIAPVVFCLV). Over 482 to 493 (SEIPSSRLRTKT) the chain is Cytoplasmic. Residues 494–514 (IILARNAYNVIQVVVTVLIMY) form a helical membrane-spanning segment. At 515–526 (QLNSEKWNWGAK) the chain is on the extracellular side. Residues 527-547 (SGFFWGGFCLATLAWAVVDLP) traverse the membrane as a helical segment. The Cytoplasmic portion of the chain corresponds to 548 to 614 (ETAGRTFIEI…GRNTSSVVNK (67 aa)). Residues 595-614 (EDLETSVVDEGRNTSSVVNK) form a disordered region.

This sequence belongs to the major facilitator superfamily. Sugar transporter (TC 2.A.1.1) family.

The protein localises to the membrane. In terms of biological role, high-affinity uptake of maltose and maltotriose. Also transports turanose but not alpha-methylglucoside, melezitose or trehalose. This chain is Maltose permease MAL31 (MAL31), found in Saccharomyces cerevisiae (strain ATCC 204508 / S288c) (Baker's yeast).